Here is a 255-residue protein sequence, read N- to C-terminus: uncharacterized protein (255 aa).

The span at 1-10 shows a compositional bias: basic residues; that stretch reads MSDSIHRRKV. Positions 1–78 are disordered; it reads MSDSIHRRKV…SPMRGLPMEE (78 aa). The segment covering 44–61 has biased composition (basic and acidic residues); it reads VFERSFSEPSLNRHRDGQ.

This is an uncharacterized protein from Arabidopsis thaliana (Mouse-ear cress).